Reading from the N-terminus, the 289-residue chain is Extracellular ribonuclease (289 aa).

The first 24 residues, Met-1–Ala-24, serve as a signal peptide directing secretion. Positions Ser-25–Gln-51 are excised as a propeptide. A disordered region spans residues Phe-177–Trp-197.

The protein localises to the secreted. Mg(2+)-activated ribonuclease which hydrolyzes RNA apparently nonspecifically into oligonucleotides with 5'-terminal phosphate. The polypeptide is Extracellular ribonuclease (bsn) (Bacillus amyloliquefaciens (Bacillus velezensis)).